The sequence spans 271 residues: Protein FAM110D (271 aa).

Disordered regions lie at residues 1–83, 116–145, and 186–245; these read MLLA…RPDS, PRDA…APEA, and PQSW…PVSV. Over residues 68 to 78 the composition is skewed to basic residues; the sequence is RPVRRGSGRRL. Residues 116 to 126 show a composition bias toward low complexity; sequence PRDAAPSSPAS. A compositionally biased stretch (gly residues) spans 220–231; sequence SPGGAGGGGGSE.

It belongs to the FAM110 family.

The polypeptide is Protein FAM110D (FAM110D) (Homo sapiens (Human)).